The sequence spans 621 residues: Chaperone protein HscA homolog (621 aa).

Belongs to the heat shock protein 70 family.

In terms of biological role, chaperone involved in the maturation of iron-sulfur cluster-containing proteins. Has a low intrinsic ATPase activity which is markedly stimulated by HscB. In Pseudomonas fluorescens (strain Pf0-1), this protein is Chaperone protein HscA homolog.